A 573-amino-acid polypeptide reads, in one-letter code: MDPQGILKAFPKRKKIHADPSSNALAKIPKREAGDARGWLSSLRAHIMPTGIGRARAELFEKQIIQHGGQVCSAQAPGVTHIVVDEGMDYERALRLLRLPQLPPGAQLVKSAWLSLCLQEKKLTDTDGFSLSSPKRSLNEPQPSKSGQDASAPGTQGVLPRTTLSLSPPCTRAVSPPPKAEKPPKTQTQLSSEDEASDGEGPQVSSADLQALISGHYPTPPGEDGGPDPAPEALGKWVCAQPSSQKATNYNLHITEKLEVLAKAYNVQGDKWRALGYAKAINALKSFHKPVSSYQEACSIPGVGRRMAEKVMEILESGHLRKLDHISDSVPVLELFSNIWGAGTKTAQMWYHQGFRSLEDIRGLASLTAQQAIGLKHYDDFLDRMPREEAAEIEQMVRVSAQAFNPGLLCVACGSFRRGKVTCGDVDVLITHPDGRSHQGIFSPLLDSLRQQGFLTDDLVSQEENGQQQKYLGVCRLPGAGQRHRRLDIIVVPYSEFACALLYFTGSAHFNRSMRALAKTKGMSLSEHALSAAVVRNSQGVKVGAGQVLPTPTEKDVFKLLGLPYREPAERDW.

The 97-residue stretch at 35–131 (DARGWLSSLR…KLTDTDGFSL (97 aa)) folds into the BRCT domain. Positions 126 to 235 (TDGFSLSSPK…GPDPAPEALG (110 aa)) are disordered. The segment covering 127-149 (DGFSLSSPKRSLNEPQPSKSGQD) has biased composition (polar residues). Residues 263–277 (KAYNVQGDKWRALGY) form a DNA-binding region. Lysine 310 functions as the Schiff-base intermediate with DNA in the catalytic mechanism. The DNA-binding stretch occupies residues 343–346 (GTKT). DCTP contacts are provided by residues arginine 384, 415–418 (SFRR), and 424–427 (GDVD). The segment at 418 to 427 (RGKVTCGDVD) is involved in primer binding. Residues aspartate 425, aspartate 427, and aspartate 488 each coordinate Mn(2+). Residues 464–503 (ENGQQQKYLGVCRLPGAGQRHRRLDIIVVPYSEFACALLY) are DNA-binding. Residue asparagine 511 coordinates dCTP.

This sequence belongs to the DNA polymerase type-X family. In terms of assembly, interacts with PCNA. Interacts with PAXX; promoting POLL recruitment to double-strand breaks (DSBs) and stimulation of the end-filling activity of POLL. Interacts with XRCC4; promoting POLL recruitment to double-strand breaks (DSBs) and stimulation of the end-filling activity of POLL. Interacts with NHEJ1/XLF; promoting POLL recruitment to double-strand breaks (DSBs) and stimulation of the end-filling activity of POLL. Requires Mn(2+) as cofactor.

It is found in the nucleus. The catalysed reaction is DNA(n) + a 2'-deoxyribonucleoside 5'-triphosphate = DNA(n+1) + diphosphate. Functionally, DNA polymerase that functions in several pathways of DNA repair. Involved in base excision repair (BER) responsible for repair of lesions that give rise to abasic (AP) sites in DNA. Also contributes to DNA double-strand break repair by non-homologous end joining and homologous recombination. Has both template-dependent and template-independent (terminal transferase) DNA polymerase activities. Also has a 5'-deoxyribose-5-phosphate lyase (dRP lyase) activity. The sequence is that of DNA polymerase lambda from Rattus norvegicus (Rat).